Consider the following 433-residue polypeptide: Putative ankyrin repeat protein R784 (433 aa).

10 ANK repeats span residues 44 to 70, 71 to 101, 102 to 131, 179 to 205, 206 to 235, 237 to 264, 265 to 294, 296 to 321, 322 to 351, and 380 to 409; these read NQNL…KTDV, NGLK…NNDL, LDLH…IVII, FYDS…NQCS, VRQK…RIFS, RRLI…IDLA, QNNF…DIHF, NGEC…NKVY, MSEK…ACMS, and NMRK…KLRE.

The sequence is that of Putative ankyrin repeat protein R784 from Acanthamoeba polyphaga mimivirus (APMV).